Consider the following 404-residue polypeptide: Histidinol dehydrogenase (404 aa).

Positions 114, 176, and 199 each coordinate NAD(+). Positions 222, 244, and 247 each coordinate substrate. Gln-244 and His-247 together coordinate Zn(2+). Active-site proton acceptor residues include Glu-300 and His-301. Positions 301, 334, 388, and 393 each coordinate substrate. Asp-334 contacts Zn(2+). Residue His-393 participates in Zn(2+) binding.

It belongs to the histidinol dehydrogenase family. Zn(2+) serves as cofactor.

It catalyses the reaction L-histidinol + 2 NAD(+) + H2O = L-histidine + 2 NADH + 3 H(+). It functions in the pathway amino-acid biosynthesis; L-histidine biosynthesis; L-histidine from 5-phospho-alpha-D-ribose 1-diphosphate: step 9/9. In terms of biological role, catalyzes the sequential NAD-dependent oxidations of L-histidinol to L-histidinaldehyde and then to L-histidine. This Archaeoglobus fulgidus (strain ATCC 49558 / DSM 4304 / JCM 9628 / NBRC 100126 / VC-16) protein is Histidinol dehydrogenase (hisD).